A 1858-amino-acid chain; its full sequence is MATLTDRTYLPPLEDCLTGRTVILSWRLVASALEDADLARLTSPALSTFLRDGFVHELLKHPARVFEPKDLKQEFETKTSSIQTVAPGVDTIKKDALWLADAVAINQVAALRIVLIEYQTRAHSHLVLPLSTQDVANIQEAAGVGDAHASSILSLLNPASAVDAETMWCDFETEARRRERILATYLSERRSFTAAVDALVTFLLHSAPGQHKDLDSLRRALLKDAFAFDEDLDVPDRSKLLTMAPTYMNLVEDCIARAQALPAKLGESFKTEAFELDWLRTAITEAVHSLSIAFQALDLDTPYFAPHELLSEWFELMNSSLFLESILGFEVVADLAMPARSLVSAICLKMLNIDRTIQFLHDFDYPDGEEPYLLSSQTLNKIHTAVTNAVNSGVAASLPVAFAWSLIVHQMHLGYQERAERRDLLVNQRAQAGFELEFQPSASTPNRRRRNSAGSIVSLEASPYDDFLREQRLDNDIAPVEQIAMLATSRGQVYQVMSEMALCLGTTHEAAFRPAVGARARLVFQDLLKRSAYLIPYQDEPVFSLLAILATGRQYWDVTDALSASSLNQVYTDMLDDETLFTQFTMQAINRFPYEFNPFSVLCRVLAAALITNKDKADVVTGWLWRTPTLTVDWNPAWDRSYELCFEDENTNSFRLTRDVDLFGSASPARPRHLAAEERFIIPEGTLGRFVTDVGRTARLEFEHSALALLGKRLEVKAAEEICDSGMAPLDVDEQAEAVAMLATVLRAESLKSTAKGGDPEAPLKFLKEASRLLPHNKDILTVISDTIDGLVEKELLELDGPQIAVLASCLQFLHAALAVCPGRVWAYMSRCALIAGDARPGRLSRITGSLDMYAERFDLLSSAVKLFAALIDSAACSAVQRRAGSTALVSVRSAVENPWLGTSEKILSRVALAIAQAALDVYESTTTWRFRSELDRSILVRDVVGLMHKLVVHAHTLSSHLTSTLSPAAAHIISSFLTPPPSASSLRFQPLLGTLLVALITPRATLYPGQSRILAERVTSVLAFCTSLLRAADFLGQTHIPLQTHLFQSACLLARLPAANAVYRAPVLELLRALVEVAGRAANGSGEPPSLLGYLGSHAARSFISLVEGIDKPFGRVEHAVVTWRFFAAVIRNRQQWMAGCLLTGRTPREALKGGGEQKIERKVGEGSVLAAAMERLREVKSLDVQEAVAVMDFVVSAQNYWPWTIFAVRKEKEVVDALRGYVRGLKAPGMVMKTDGAAAAAFQARIAAYVAETFAMQLYHMRQMRQAEKFAGELVADLDYFLREGVMVWGYNASLHGNFARNFAKRFPGVEVDDFKRTMWLPRELGKGYYYALEVAEQMLGFDAGWGGVKQSGFRKEMETANLNLSLVEAQVSLFHAWEYLLLELTLSLLPKKENAAFARQVLQVVEQCLEANQRSQPPENIFVVLGHARAGLALTLLQRLADANQLPRDVTHLLALVSSAIHAVENPFGANDLPYFRTLLKILFVVLRAAKQGTAKPGESNVAITQQVLTILDRVVARCFRALAALVHEQQQNATDGTTTAPEDLALITAILQACLSVPGIEQCQVQVLNIMAAHDVFQVAVALFSWADRLLPANPSPASSSTSTSATNPASGDPVYGELALLFLLELSALPALAEHLACDGLLGHLAAARLAGYMRRTNVGPFAENAGAARCYAIWAKCLLPLLLNILAALGSTVAPEVAWVLNQFPNLLQSSVERIEPPGFSRPTLSLASTPPRQKFISLLEISEIHSLALLTRVLAACRAQNARDVPEVTWDGAKVLECVEYWLRGRKVLRERLVPLGPREVEWRGMVATGGVVGVAGDGGEGCENRLEEKAVGLLVGVREVLEGGLEGEGE.

It belongs to the Nup188 family. As to quaternary structure, component of the nuclear pore complex (NPC). NPC constitutes the exclusive means of nucleocytoplasmic transport. NPCs allow the passive diffusion of ions and small molecules and the active, nuclear transport receptor-mediated bidirectional transport of macromolecules such as proteins, RNAs, ribonucleoparticles (RNPs), and ribosomal subunits across the nuclear envelope. Due to its 8-fold rotational symmetry, all subunits are present with 8 copies or multiples thereof. Part of a tetrameric NUP188-NUP170-NIC96-NUP53 module.

It localises to the nucleus. The protein localises to the nuclear pore complex. Its subcellular location is the nucleus membrane. Its function is as follows. Functions as a component of the nuclear pore complex (NPC). NPC components, collectively referred to as nucleoporins (NUPs), can play the role of both NPC structural components and of docking or interaction partners for transiently associated nuclear transport factors. NUP188 probably plays an important role in NPC assembly and organization. The sequence is that of Nucleoporin NUP188 (NUP188) from Chaetomium thermophilum (strain DSM 1495 / CBS 144.50 / IMI 039719) (Thermochaetoides thermophila).